A 1114-amino-acid chain; its full sequence is Brother of CDO (1114 aa).

The signal sequence occupies residues 1–30; that stretch reads MLRGTMTAWRGMRPEVTLACLLLATAGCFA. The Extracellular segment spans residues 31-855; it reads DLNEVPQVTV…MVARSSDLPY (825 aa). 4 Ig-like C2-type domains span residues 36 to 123, 129 to 213, 235 to 315, and 323 to 409; these read PQVT…ATVT, DFKL…VKTS, PEAQ…VILY, and PEVT…LRTS. 4 cysteine pairs are disulfide-bonded: Cys57–Cys106, Cys150–Cys200, Cys252–Cys299, and Cys344–Cys391. Residues Asn65, Asn76, Asn98, Asn189, and Asn275 are each glycosylated (N-linked (GlcNAc...) asparagine). Residues 422 to 474 form a disordered region; that stretch reads ELATGTPPVSPSKLGNPEQMLRGQPALPRPPTSVGPASPQCPGEKGQGAPAEA. Fibronectin type-III domains lie at 474–571, 608–703, and 712–812; these read APII…GRRP, APDR…VVSG, and PVAG…TKAR. Asn517 carries N-linked (GlcNAc...) asparagine glycosylation. Residues 577 to 615 are disordered; sequence ASKEQQIQRDDPGASPQSSSQPDHGRLSPPEAPDRPTIS. N-linked (GlcNAc...) asparagine glycosylation is found at Asn725 and Asn759. Residues 812–833 form a disordered region; that stretch reads RKSSGQPGRLPPPTLAPPQPPL. Residues 820-833 show a composition bias toward pro residues; it reads RLPPPTLAPPQPPL. Residues 856 to 876 form a helical membrane-spanning segment; sequence LIVGVVLGSIVLIIVTFIPFC. Topologically, residues 877 to 1114 are cytoplasmic; it reads LWRAWSKQKH…VSFETPPLTI (238 aa). The span at 972–986 shows a compositional bias: polar residues; it reads QTHLGNGYDPQSHQI. The disordered stretch occupies residues 972-998; that stretch reads QTHLGNGYDPQSHQITRGPKSSPDEGS.

In terms of assembly, part of a complex that contains BOC, CDON, NEO1, cadherins and CTNNB1. Interacts with NTN3. Interacts with SHH, DHH and IHH. Interacts with CDH2 and CTNNB1. Interacts with CDH15 only during the early stages of myoblast differentiation. N-glycosylated. As to expression, detected in skeletal muscle, heart, thymus, kidney and small intestine. Detected at lower levels in brain, placenta, lung and colon mucosa.

It localises to the cell membrane. Its function is as follows. Component of a cell-surface receptor complex that mediates cell-cell interactions between muscle precursor cells. Promotes differentiation of myogenic cells. The polypeptide is Brother of CDO (BOC) (Homo sapiens (Human)).